Consider the following 233-residue polypeptide: Ribonuclease 3 (233 aa).

One can recognise an RNase III domain in the interval 6 to 135; the sequence is QDYLAKEFNI…FIGALYLDQG (130 aa). Glu48 contacts Mg(2+). The active site involves Asp52. Residues Asp121 and Glu124 each coordinate Mg(2+). Glu124 is an active-site residue. The DRBM domain occupies 161 to 230; the sequence is DAKTSLQEFL…AQQALDNMRN (70 aa). The interval 205 to 233 is disordered; sequence IGEGKGSSKKHAEMQAAQQALDNMRNKNK.

This sequence belongs to the ribonuclease III family. Homodimer. Mg(2+) serves as cofactor.

It is found in the cytoplasm. The enzyme catalyses Endonucleolytic cleavage to 5'-phosphomonoester.. In terms of biological role, digests double-stranded RNA. Involved in the processing of primary rRNA transcript to yield the immediate precursors to the large and small rRNAs (23S and 16S). Processes some mRNAs, and tRNAs when they are encoded in the rRNA operon. Processes pre-crRNA and tracrRNA of type II CRISPR loci if present in the organism. The sequence is that of Ribonuclease 3 from Limosilactobacillus reuteri (strain DSM 20016) (Lactobacillus reuteri).